The sequence spans 615 residues: Probable transporter mch1 (615 aa).

Positions 1–35 (MTGSIGQAPAIDKRDFDINRRSSTPHETAAQEDEA) are disordered. The span at 11–20 (IDKRDFDINR) shows a compositional bias: basic and acidic residues. A helical transmembrane segment spans residues 84–104 (FVWGVITCLGAGSITAFSLYG). Asn112 carries N-linked (GlcNAc...) asparagine glycosylation. Helical transmembrane passes span 120 to 140 (EVSI…GYLC), 147 to 167 (PLTL…AFVY), 182 to 202 (FWVM…MYLA), 218 to 238 (GIIL…QSQV), and 261 to 281 (FLFL…ALRI). Asn329 is a glycosylation site (N-linked (GlcNAc...) asparagine). Transmembrane regions (helical) follow at residues 371 to 391 (IFLA…VTGP), 428 to 448 (IIAL…DLFA), 477 to 497 (LAFL…LASP), 512 to 532 (LVGL…SVVW), 538 to 558 (GTNW…WGVI), and 583 to 603 (FGFW…AWLV).

Belongs to the major facilitator superfamily.

Its subcellular location is the vacuole membrane. Probable transporter. The polypeptide is Probable transporter mch1 (mch1) (Emericella nidulans (strain FGSC A4 / ATCC 38163 / CBS 112.46 / NRRL 194 / M139) (Aspergillus nidulans)).